The primary structure comprises 488 residues: Calcium uniporter protein, mitochondrial (488 aa).

A mitochondrion-targeting transit peptide spans 1–74 (MRALVSRTPI…RSFQLSASSR (74 aa)). The segment at 65–117 (RSFQLSASSRDKRGPQSAEPDPLERLEVKKVQQQHENEKDDSGRDTKSGGKVA) is disordered. The Mitochondrial matrix segment spans residues 75–339 (DKRGPQSAEP…ECDALAHRGA (265 aa)). A compositionally biased stretch (basic and acidic residues) spans 86-112 (PLERLEVKKVQQQHENEKDDSGRDTKS). Residues 340–361 (QRVALGGFGILAFWWYIVYKLT) traverse the membrane as a helical segment. The Mitochondrial intermembrane portion of the chain corresponds to 362–370 (FETDLGWDT). The short motif at 368 to 376 (WDTMEPVTY) is the Selectivity filter element. The helical transmembrane segment at 371–391 (MEPVTYLVSLSTLMGGYLWFL) threads the bilayer. E372 contributes to the Ca(2+) binding site. The Mitochondrial matrix portion of the chain corresponds to 392-488 (YHNREISYRS…ERPKDDRDDD (97 aa)). Residues 464 to 488 (ALKKERRLKNGSQKEERPKDDRDDD) form a disordered region. A compositionally biased stretch (basic and acidic residues) spans 475-488 (SQKEERPKDDRDDD).

This sequence belongs to the MCU (TC 1.A.77) family. As to quaternary structure, homotetramer, assembles in a dimer or dimers configuration with two interfaces.

It localises to the mitochondrion inner membrane. It catalyses the reaction Ca(2+)(in) = Ca(2+)(out). With respect to regulation, inhibited by ruthenium red or its derivative Ru360. Functionally, highly selective calcium channel localized to the inner mitochondrial membrane, which mediates calcium uptake into the mitochondrial matrix. Mitochondrial calcium homeostasis plays key roles in cellular physiology and regulates ATP production, cytoplasmic calcium signals and activation of cell death pathways. Sufficient to operate as a pore-forming channel without the need of calcium-sensor or auxiliary subunit. The polypeptide is Calcium uniporter protein, mitochondrial (Neosartorya fischeri (strain ATCC 1020 / DSM 3700 / CBS 544.65 / FGSC A1164 / JCM 1740 / NRRL 181 / WB 181) (Aspergillus fischerianus)).